The primary structure comprises 67 residues: Large ribosomal subunit protein bL35 (67 aa).

It belongs to the bacterial ribosomal protein bL35 family.

This Acidovorax ebreus (strain TPSY) (Diaphorobacter sp. (strain TPSY)) protein is Large ribosomal subunit protein bL35.